The chain runs to 487 residues: Histamine H1 receptor (487 aa).

At 1 to 29 (MSLPNSSCLLEDKMCEGNKTTMASPQLMP) the chain is on the extracellular side. N5 and N18 each carry an N-linked (GlcNAc...) asparagine glycan. The chain crosses the membrane as a helical span at residues 30–50 (LVVVLSTISLVTVGLNLLVLY). Residues 51 to 64 (AVRSERKLHTVGNL) lie on the Cytoplasmic side of the membrane. A helical transmembrane segment spans residues 65–89 (YIVSLSVADLIVGAVVMPMNILYLL). Topologically, residues 90 to 97 (MSKWSLGR) are extracellular. The chain crosses the membrane as a helical span at residues 98 to 123 (PLCLFWLSMDYVASTASIFSVFILCI). C100 and C180 form a disulfide bridge. Residues D107 and T112 each coordinate histamine. The tract at residues 107-112 (DYVAST) is important for agonist binding. At 124 to 144 (DRYRSVQQPLRYLKYRTKTRA) the chain is on the cytoplasmic side. Phosphothreonine occurs at positions 140 and 142. Residues 145–164 (SATILGAWFLSFLWVIPILG) traverse the membrane as a helical segment. At 165–188 (WNHFRQQISVRREDKCETDFYDVT) the chain is on the extracellular side. Residues 189 to 211 (WFKVMTAIINFYLPTLLMLWFYA) form a helical membrane-spanning segment. N198 is a histamine binding site. Residues 212-416 (KIYKAVQKHC…MNRERKAAKQ (205 aa)) lie on the Cytoplasmic side of the membrane. S230 is modified (phosphoserine). Residues 238 to 261 (KLRPENPKGDAKKPGKESPWEVLK) show a composition bias toward basic and acidic residues. The tract at residues 238–286 (KLRPENPKGDAKKPGKESPWEVLKRKPKDAGGGSVLKSPSQTPKEMKSP) is disordered. T279 is modified (phosphothreonine). 2 positions are modified to phosphoserine: S344 and S347. Residues 345–379 (EISEDQMLGDSQSFSRTDSDTTTETAPGKGKLRSG) form a disordered region. The segment covering 353-369 (GDSQSFSRTDSDTTTET) has biased composition (polar residues). A phosphoserine mark is found at S380, S396, and S398. A helical transmembrane segment spans residues 417 to 440 (LGFIMAAFILCWIPYFIFFMVIAF). Residues 424-428 (FILCW) form an important for agonist binding region. Y431 provides a ligand contact to histamine. An intrachain disulfide couples C441 to C444. Residues 441 to 446 (CKNCCN) lie on the Extracellular side of the membrane. A helical transmembrane segment spans residues 447 to 469 (EHLHMFTIWLGYINSTLNPLIYP). The Cytoplasmic portion of the chain corresponds to 470–487 (LCNENFKKTFKRILHIRS).

This sequence belongs to the G-protein coupled receptor 1 family. In terms of processing, phosphorylation at sites in the second and third cytoplasmic loops independently contribute to agonist-induced receptor down-regulation.

It localises to the cell membrane. G-protein-coupled receptor for histamine, a biogenic amine that functions as an immune modulator and a neurotransmitter. Through the H1 receptor, histamine mediates the contraction of smooth muscles and increases capillary permeability due to contraction of terminal venules. Also mediates neurotransmission in the central nervous system and thereby regulates circadian rhythms, emotional and locomotor activities as well as cognitive functions. The sequence is that of Histamine H1 receptor from Pongo pygmaeus (Bornean orangutan).